The chain runs to 83 residues: Short neurotoxin D (83 aa).

A signal peptide spans 1-21 (MKTLLLTLVVVTMVCLDLGYT). 4 disulfides stabilise this stretch: Cys24–Cys45, Cys38–Cys62, Cys64–Cys75, and Cys76–Cys81.

Belongs to the three-finger toxin family. Short-chain subfamily. Type I alpha-neurotoxin sub-subfamily. Expressed by the venom gland.

It localises to the secreted. Functionally, binds to muscle nicotinic acetylcholine receptor (nAChR) and inhibit acetylcholine from binding to the receptor, thereby impairing neuromuscular transmission. The protein is Short neurotoxin D of Laticauda colubrina (Yellow-lipped sea krait).